The following is a 428-amino-acid chain: Enolase (428 aa).

Residue Gln-163 participates in (2R)-2-phosphoglycerate binding. Catalysis depends on Glu-205, which acts as the Proton donor. Mg(2+)-binding residues include Asp-242, Glu-286, and Asp-313. The (2R)-2-phosphoglycerate site is built by Lys-338, Arg-367, Ser-368, and Lys-389. Lys-338 (proton acceptor) is an active-site residue.

It belongs to the enolase family. Mg(2+) serves as cofactor.

The protein resides in the cytoplasm. It is found in the secreted. The protein localises to the cell surface. The catalysed reaction is (2R)-2-phosphoglycerate = phosphoenolpyruvate + H2O. Its pathway is carbohydrate degradation; glycolysis; pyruvate from D-glyceraldehyde 3-phosphate: step 4/5. Catalyzes the reversible conversion of 2-phosphoglycerate (2-PG) into phosphoenolpyruvate (PEP). It is essential for the degradation of carbohydrates via glycolysis. This is Enolase from Bordetella avium (strain 197N).